Here is a 213-residue protein sequence, read N- to C-terminus: MPGEATETVPAIEQQLLQPQAETGSGTESDSDESVPELEEQDSTQVTAQVQLVVAAEIDEEPVSKAKQRRSEKKARKARFKLGLQQVTGVTRVTIRKSKNILFVITKPDVYKSPASDTYMVFGEAKIEDLSQEAQLAAAEKFKVQGEAVSNIQENTQTPTVQEGSEDEEVDETGVEIKDIELVLSQANVWGAKAVRALKNSNDIVNAIMELTM.

Positions 1–46 (MPGEATETVPAIEQQLLQPQAETGSGTESDSDESVPELEEQDSTQV) are disordered. The segment covering 15 to 28 (QLLQPQAETGSGTE) has biased composition (polar residues). Residues 29–42 (SDSDESVPELEEQD) are compositionally biased toward acidic residues. 2 positions are modified to phosphoserine: Ser43 and Ser131. In terms of domain architecture, NAC-A/B spans 69-134 (RRSEKKARKA…AKIEDLSQEA (66 aa)). The residue at position 141 (Lys141) is an N6-acetyllysine; alternate. Residue Lys141 forms a Glycyl lysine isopeptide (Lys-Gly) (interchain with G-Cter in SUMO2); alternate linkage. Thr160 carries the post-translational modification Phosphothreonine. Residues Ser165, Ser185, and Ser201 each carry the phosphoserine modification. The UBA domain maps to 175–211 (VEIKDIELVLSQANVWGAKAVRALKNSNDIVNAIMEL). Thr212 carries the post-translational modification Phosphothreonine.

This sequence belongs to the NAC-alpha family.

This is Putative nascent polypeptide-associated complex subunit alpha-like protein from Homo sapiens (Human).